The following is an 842-amino-acid chain: Glycogen phosphorylase, muscle form (842 aa).

S2 carries the post-translational modification N-acetylserine. S15 carries the phosphoserine; by PHK; in form phosphorylase A modification. 2 residues coordinate AMP: D43 and Y76. Residues Y204 and Y227 each carry the phosphotyrosine modification. 310–319 contacts AMP; that stretch reads RRFKSSKFGC. At S430 the chain carries Phosphoserine. A Phosphotyrosine modification is found at Y473. The residue at position 514 (S514) is a Phosphoserine. Residue K681 is modified to N6-(pyridoxal phosphate)lysine. A phosphoserine mark is found at S747 and S748.

Belongs to the glycogen phosphorylase family. Homodimer. Homotetramer; to form the enzymatically active phosphorylase A. Pyridoxal 5'-phosphate serves as cofactor. In terms of processing, phosphorylation of Ser-15 converts phosphorylase B (unphosphorylated) to phosphorylase A.

It carries out the reaction [(1-&gt;4)-alpha-D-glucosyl](n) + phosphate = [(1-&gt;4)-alpha-D-glucosyl](n-1) + alpha-D-glucose 1-phosphate. Allosterically regulated through the non-covalent binding of metabolites, being activated by AMP and inhibited by ATP, ADP, and glucose-6-phosphate. The activity is also controlled by post-translational modifications including phosphorylation. Functionally, allosteric enzyme that catalyzes the rate-limiting step in glycogen catabolism, the phosphorolytic cleavage of glycogen to produce glucose-1-phosphate, and plays a central role in maintaining cellular and organismal glucose homeostasis. The polypeptide is Glycogen phosphorylase, muscle form (Homo sapiens (Human)).